We begin with the raw amino-acid sequence, 1317 residues long: Putative late blight resistance protein homolog R1B-14 (1317 aa).

2 coiled-coil regions span residues 419-442 (RYSD…ESLQ) and 535-556 (RMNE…RLLN). Residues 521-823 (TVITHTSSQL…SESFIKSSEG (303 aa)) enclose the NB-ARC domain. Residue 568-575 (GMPGLGKT) participates in ATP binding. 6 LRR repeats span residues 944–968 (FKFL…LFYL), 987–1015 (LWNL…IWDM), 1090–1114 (PIRL…ISAP), 1138–1161 (LKHL…KVSN), 1164–1186 (FPQL…ADDA), and 1187–1211 (FPNL…FMDI). Residues 1251–1317 (IKKMVLKFDI…VSKLRKRGML (67 aa)) enclose the HMA domain.

It belongs to the disease resistance NB-LRR family.

It is found in the cytoplasm. Its subcellular location is the membrane. Confers resistance to late blight (Phytophthora infestans) races carrying the avirulence gene Avr1. Resistance proteins guard the plant against pathogens that contain an appropriate avirulence protein via an indirect interaction with this avirulence protein. That triggers a defense system including the hypersensitive response, which restricts the pathogen growth. In Solanum demissum (Wild potato), this protein is Putative late blight resistance protein homolog R1B-14 (R1B-14).